Consider the following 326-residue polypeptide: tRNA(Ile)-lysidine synthase (326 aa).

Residue 33–38 (SGGPDS) participates in ATP binding.

The protein belongs to the tRNA(Ile)-lysidine synthase family.

It localises to the cytoplasm. It carries out the reaction cytidine(34) in tRNA(Ile2) + L-lysine + ATP = lysidine(34) in tRNA(Ile2) + AMP + diphosphate + H(+). Functionally, ligates lysine onto the cytidine present at position 34 of the AUA codon-specific tRNA(Ile) that contains the anticodon CAU, in an ATP-dependent manner. Cytidine is converted to lysidine, thus changing the amino acid specificity of the tRNA from methionine to isoleucine. This chain is tRNA(Ile)-lysidine synthase, found in Novosphingobium aromaticivorans (strain ATCC 700278 / DSM 12444 / CCUG 56034 / CIP 105152 / NBRC 16084 / F199).